Reading from the N-terminus, the 127-residue chain is Fluoride-specific ion channel FluC (127 aa).

Transmembrane regions (helical) follow at residues leucine 4–methionine 24, isoleucine 35–phenylalanine 55, threonine 71–leucine 91, and leucine 101–phenylalanine 121. Residues glycine 75 and threonine 78 each contribute to the Na(+) site.

The protein belongs to the fluoride channel Fluc/FEX (TC 1.A.43) family.

Its subcellular location is the cell inner membrane. The enzyme catalyses fluoride(in) = fluoride(out). With respect to regulation, na(+) is not transported, but it plays an essential structural role and its presence is essential for fluoride channel function. Fluoride-specific ion channel. Important for reducing fluoride concentration in the cell, thus reducing its toxicity. The chain is Fluoride-specific ion channel FluC from Klebsiella pneumoniae (strain 342).